The following is a 428-amino-acid chain: Enolase (428 aa).

Glutamine 163 contacts (2R)-2-phosphoglycerate. Glutamate 205 (proton donor) is an active-site residue. Residues aspartate 242, glutamate 286, and aspartate 313 each contribute to the Mg(2+) site. (2R)-2-phosphoglycerate is bound by residues lysine 338, arginine 367, serine 368, and lysine 389. The Proton acceptor role is filled by lysine 338.

Belongs to the enolase family. The cofactor is Mg(2+).

It localises to the cytoplasm. It is found in the secreted. Its subcellular location is the cell surface. It carries out the reaction (2R)-2-phosphoglycerate = phosphoenolpyruvate + H2O. It participates in carbohydrate degradation; glycolysis; pyruvate from D-glyceraldehyde 3-phosphate: step 4/5. In terms of biological role, catalyzes the reversible conversion of 2-phosphoglycerate (2-PG) into phosphoenolpyruvate (PEP). It is essential for the degradation of carbohydrates via glycolysis. This Bordetella bronchiseptica (strain ATCC BAA-588 / NCTC 13252 / RB50) (Alcaligenes bronchisepticus) protein is Enolase.